A 381-amino-acid polypeptide reads, in one-letter code: Peptidoglycan glycosyltransferase MrdB (381 aa).

Transmembrane regions (helical) follow at residues 11 to 31, 40 to 60, 66 to 86, 102 to 122, 132 to 152, 156 to 176, 180 to 200, 263 to 283, 297 to 317, and 328 to 348; these read FDLLPFVFIIPLLVVSFLLIF, KQGVYYAIGFLLFWVVFFIPF, WLFALYWACVILLALVDFMGS, ITLQPSEPVKIAILLLLAHLI, YDWGMFLKLSFYICLPAALIL, DLGTALIVLIMGFGILLIVGL, VWLPLLIALIVASPIAYHFLH, FGFLGAILLFAIYIGLSLHLF, IVALGISILIFVYSSVNIAMT, and LPLFSYGGSSFITFMILFAIL.

It belongs to the SEDS family. MrdB/RodA subfamily.

The protein localises to the cell inner membrane. The enzyme catalyses [GlcNAc-(1-&gt;4)-Mur2Ac(oyl-L-Ala-gamma-D-Glu-L-Lys-D-Ala-D-Ala)](n)-di-trans,octa-cis-undecaprenyl diphosphate + beta-D-GlcNAc-(1-&gt;4)-Mur2Ac(oyl-L-Ala-gamma-D-Glu-L-Lys-D-Ala-D-Ala)-di-trans,octa-cis-undecaprenyl diphosphate = [GlcNAc-(1-&gt;4)-Mur2Ac(oyl-L-Ala-gamma-D-Glu-L-Lys-D-Ala-D-Ala)](n+1)-di-trans,octa-cis-undecaprenyl diphosphate + di-trans,octa-cis-undecaprenyl diphosphate + H(+). Its pathway is cell wall biogenesis; peptidoglycan biosynthesis. In terms of biological role, peptidoglycan polymerase that is essential for cell wall elongation. The protein is Peptidoglycan glycosyltransferase MrdB of Helicobacter pylori (strain J99 / ATCC 700824) (Campylobacter pylori J99).